A 291-amino-acid chain; its full sequence is Porphobilinogen deaminase (291 aa).

Residue Cys-237 is modified to S-(dipyrrolylmethanemethyl)cysteine.

It belongs to the HMBS family. In terms of assembly, monomer. Dipyrromethane is required as a cofactor.

The enzyme catalyses 4 porphobilinogen + H2O = hydroxymethylbilane + 4 NH4(+). It functions in the pathway porphyrin-containing compound metabolism; protoporphyrin-IX biosynthesis; coproporphyrinogen-III from 5-aminolevulinate: step 2/4. Tetrapolymerization of the monopyrrole PBG into the hydroxymethylbilane pre-uroporphyrinogen in several discrete steps. The sequence is that of Porphobilinogen deaminase from Clostridium perfringens (strain SM101 / Type A).